An 824-amino-acid chain; its full sequence is ABC transporter B family member 7 (824 aa).

The segment at 41–101 is disordered; it reads RNSVKFNLDT…NKNNKNKINN (61 aa). Residues 63–101 are compositionally biased toward low complexity; that stretch reads NNNKNNNNNNNNNNNNNNNNNNNNNNNNNNKNNKNKINN. 6 helical membrane-spanning segments follow: residues 164 to 184, 252 to 272, 325 to 345, 347 to 367, 431 to 451, and 461 to 481; these read IWYF…QLAL, WIII…LLFT, LSTL…LVFL, WKVT…FLVF, AFWI…IYGF, and ILLL…NGLI. The region spanning 167 to 489 is the ABC transmembrane type-1 domain; that stretch reads FVFAFLALSI…LIGSINEIQK (323 aa). The 247-residue stretch at 521–767 folds into the ABC transporter domain; sequence ISFDNVYFNN…STSFYVTSVL (247 aa). 570–576 is an ATP binding site; sequence GPSQSKE. The interval 772–813 is disordered; the sequence is NKYNNNNNNNNNNNNNNNNNNNNNNNNNNNNNNNNNNNNINN.

This sequence belongs to the ABC transporter superfamily. ABCB family.

The protein resides in the membrane. The chain is ABC transporter B family member 7 (abcB7) from Dictyostelium discoideum (Social amoeba).